Reading from the N-terminus, the 241-residue chain is Protein-L-isoaspartate O-methyltransferase (241 aa).

Serine 69 is a catalytic residue.

This sequence belongs to the methyltransferase superfamily. L-isoaspartyl/D-aspartyl protein methyltransferase family.

The protein resides in the cytoplasm. The catalysed reaction is [protein]-L-isoaspartate + S-adenosyl-L-methionine = [protein]-L-isoaspartate alpha-methyl ester + S-adenosyl-L-homocysteine. Catalyzes the methyl esterification of L-isoaspartyl residues in peptides and proteins that result from spontaneous decomposition of normal L-aspartyl and L-asparaginyl residues. It plays a role in the repair and/or degradation of damaged proteins. The polypeptide is Protein-L-isoaspartate O-methyltransferase (Hyperthermus butylicus (strain DSM 5456 / JCM 9403 / PLM1-5)).